The sequence spans 790 residues: Choline transporter-like 2 (790 aa).

A helical membrane pass occupies residues 47–67 (PCLFLFVTFLCAWGYVAYYAV). Residues Asn-102 and Asn-259 are each glycosylated (N-linked (GlcNAc...) asparagine). Transmembrane regions (helical) follow at residues 288–308 (IITP…FQMI), 319–339 (ILVF…MLRW), and 344–364 (LVWI…YYSF). A glycan (N-linked (GlcNAc...) asparagine) is linked at Asn-384. 2 helical membrane passes run 400–420 (LWIL…VLVL) and 449–469 (LVPW…LLFL). N-linked (GlcNAc...) asparagine glycosylation is present at Asn-483. 4 consecutive transmembrane segments (helical) span residues 545–565 (VIGF…VLAF), 592–612 (VYYH…CKII), 691–711 (VTGF…AAVT), and 728–748 (FVPA…FFSV).

The protein belongs to the CTL (choline transporter-like) family.

The protein resides in the membrane. This Anopheles gambiae (African malaria mosquito) protein is Choline transporter-like 2.